A 684-amino-acid chain; its full sequence is Cleavage and polyadenylation specificity factor subunit 3 (684 aa).

An N-acetylserine modification is found at S2. Positions 71, 73, 75, 76, 158, and 179 each coordinate Zn(2+). H396 acts as the Proton donor in catalysis. H418 contributes to the Zn(2+) binding site. Residues K462, K465, and K545 each participate in a glycyl lysine isopeptide (Lys-Gly) (interchain with G-Cter in SUMO) cross-link. S659 carries the phosphoserine modification. The residue at position 681 (T681) is a Phosphothreonine.

Belongs to the metallo-beta-lactamase superfamily. RNA-metabolizing metallo-beta-lactamase-like family. CPSF3 subfamily. Component of the cleavage and polyadenylation specificity factor (CPSF) complex, composed of CPSF1, CPSF2, CPSF3, CPSF4 and FIP1L1. Interacts with CPSF2, CSTF2 and SYMPK. Interacts with TUT1; the interaction is direct and mediates the recruitment of the CPSF complex on the 3'UTR of pre-mRNAs. Interacts with WDR33. Interacts with ZC3H3. Requires Zn(2+) as cofactor. Post-translationally, sumoylated on Lys-462, Lys-465 and Lys-545, preferentially by SUMO3.

It is found in the nucleus. Component of the cleavage and polyadenylation specificity factor (CPSF) complex that plays a key role in pre-mRNA 3'-end formation, recognizing the AAUAAA signal sequence and interacting with poly(A) polymerase and other factors to bring about cleavage and poly(A) addition. Has endonuclease activity, and functions as an mRNA 3'-end-processing endonuclease. Also involved in the histone 3'-end pre-mRNA processing. U7 snRNP-dependent protein that induces both the 3'-endoribonucleolytic cleavage of histone pre-mRNAs and acts as a 5' to 3' exonuclease for degrading the subsequent downstream cleavage product (DCP) of mature histone mRNAs. Cleavage occurs after the 5'-ACCCA-3' sequence in the histone pre-mRNA leaving a 3'hydroxyl group on the upstream fragment containing the stem loop (SL) and 5' phosphate on the downstream cleavage product (DCP) starting with CU nucleotides. The U7-dependent 5' to 3' exonuclease activity is processive and degrades the DCP RNA substrate even after complete removal of the U7-binding site. Binds to the downstream cleavage product (DCP) of histone pre-mRNAs and the cleaved DCP RNA substrate in a U7 snRNP dependent manner. Required for entering/progressing through S-phase of the cell cycle. Required for the selective processing of microRNAs (miRNAs) during embryonic stem cell differentiation via its interaction with ISY1. Required for the biogenesis of all miRNAs from the pri-miR-17-92 primary transcript except miR-92a. Only required for the biogenesis of miR-290 and miR-96 from the pri-miR-290-295 and pri-miR-96-183 primary transcripts, respectively. The sequence is that of Cleavage and polyadenylation specificity factor subunit 3 (CPSF3) from Bos taurus (Bovine).